A 359-amino-acid polypeptide reads, in one-letter code: Membrane-bound lytic murein transglycosylase C (359 aa).

The N-terminal stretch at 1 to 16 (MKKYLALALIAPLLIS) is a signal peptide. Cysteine 17 carries the N-palmitoyl cysteine lipid modification. Residue cysteine 17 is the site of S-diacylglycerol cysteine attachment.

Belongs to the transglycosylase Slt family.

The protein localises to the cell outer membrane. The enzyme catalyses Exolytic cleavage of the (1-&gt;4)-beta-glycosidic linkage between N-acetylmuramic acid (MurNAc) and N-acetylglucosamine (GlcNAc) residues in peptidoglycan, from either the reducing or the non-reducing ends of the peptidoglycan chains, with concomitant formation of a 1,6-anhydrobond in the MurNAc residue.. Murein-degrading enzyme. May play a role in recycling of muropeptides during cell elongation and/or cell division. The sequence is that of Membrane-bound lytic murein transglycosylase C from Escherichia coli (strain SE11).